The chain runs to 3117 residues: Centrosome-associated protein 350 (3117 aa).

The interval 1–24 (MRSSKSKEVPLPNPRNSQSKDTVQ) is disordered. Over residues 14-24 (PRNSQSKDTVQ) the composition is skewed to polar residues. Ser86, Ser139, Ser142, and Ser218 each carry phosphoserine. 4 disordered regions span residues 249 to 275 (PKALRLTDSSPSSTSTSNSQRLDILKR), 436 to 514 (ILGP…NKQE), 548 to 625 (TVEL…TEQK), and 671 to 722 (LEEP…PPQP). Residues 255-267 (TDSSPSSTSTSNS) show a composition bias toward low complexity. Basic and acidic residues predominate over residues 469–501 (GRAESDPRLDVLHRHLQRNSERSRSKSRSENNI). 2 positions are modified to phosphoserine: Ser473 and Ser507. The span at 563 to 573 (PRSHSPVKRKP) shows a compositional bias: basic residues. 2 stretches are compositionally biased toward basic and acidic residues: residues 591-625 (YDTDEVRQYIVRQQEERKRKQNEEKKAQKEATEQK) and 694-703 (ESDKENKVQE). Residues 598 to 645 (QYIVRQQEERKRKQNEEKKAQKEATEQKNKRLQELYRKQKEAFTKVKN) are a coiled coil. Ser695 carries the post-translational modification Phosphoserine. Positions 705 to 718 (PPSASSSSDMSLSE) are enriched in low complexity. At Thr878 the chain carries Phosphothreonine. Residue Ser939 is modified to Phosphoserine. The span at 981 to 992 (SVSEGPLLSEGS) shows a compositional bias: low complexity. The interval 981 to 1002 (SVSEGPLLSEGSLSEEEGDQDG) is disordered. Ser1061 bears the Phosphoserine mark. Residues 1081 to 1298 (EDKLDRGTST…GFKPNAPLTD (218 aa)) form a disordered region. Positions 1087–1102 (GTSTSRPLNATATPLS) are enriched in polar residues. Positions 1135–1144 (QEDHSNRKSA) are enriched in basic and acidic residues. 2 stretches are compositionally biased toward low complexity: residues 1153-1172 (TSQHSSGAQSAASSRSSTSS) and 1251-1267 (QKTPTSPLSPSSQKSLQ). Thr1253 is modified (phosphothreonine). Ser1256 and Ser1259 each carry phosphoserine. Over residues 1272-1283 (GTSSERSKSSVM) the composition is skewed to polar residues. Positions 1369 to 1411 (IKAQQQRHERDLALLKLKAEQEALESQRQLEETRNKAAQVHAE) form a coiled coil. Disordered stretches follow at residues 1494 to 1674 (TRTE…GGQD) and 1794 to 1854 (KLKS…SRMD). Residues 1503 to 1512 (PSVSLSQSKE) show a composition bias toward polar residues. 2 stretches are compositionally biased toward low complexity: residues 1522 to 1535 (YSASYDSYSESSGY) and 1543 to 1556 (SSGSSRQESPSVPS). Positions 1558–1571 (KENEKKLNGEKIES) are enriched in basic and acidic residues. The residue at position 1613 (Ser1613) is a Phosphoserine. Residues 1631–1647 (ESHRRFNMEKRRGHHDD) are compositionally biased toward basic and acidic residues. 2 positions are modified to phosphoserine: Ser1648 and Ser1653. Positions 1707 to 1800 (KALKEKTKAE…LQEKLKSAGE (94 aa)) form a coiled coil. Over residues 1794 to 1815 (KLKSAGESKLDSHSDDDTKDNK) the composition is skewed to basic and acidic residues. Phosphoserine is present on Ser1818. A compositionally biased stretch (low complexity) spans 1827–1841 (RSPSPISISSSETSS). A coiled-coil region spans residues 1856-1899 (KFLTKREQKLMQRRQHAEELLEWKRRLDAEEAEIRQMEKQALAA). The span at 1903 to 1925 (ELIKPKTPKKELEDQRTEQKEIA) shows a compositional bias: basic and acidic residues. Disordered stretches follow at residues 1903 to 2020 (ELIK…QCHL), 2107 to 2221 (ELSQ…ESGD), 2329 to 2356 (LKERQSDQDMNHSPNIQSGKDIHEQKNT), and 2407 to 2432 (KDSQSCRDKPQPMRSSTSGATSFGSN). Ser1936 carries the phosphoserine modification. Residues 1983-2005 (ELESSTSPSKHSLPKSCTSVSKQ) are compositionally biased toward polar residues. Positions 2051–2110 (EGRIRALKDELRKRKSVVNQLKKEQKKRQKERLKAQEASLIKQLESYDEFIKKTEAELSQ) form a coiled coil. Residues 2111-2129 (DLETSPTAKPQIKTLSSAS) show a composition bias toward polar residues. A Phosphoserine modification is found at Ser2115. Residues 2141–2170 (HRSETAKNWKSLTESERSRGSLESIAEHVD) are compositionally biased toward basic and acidic residues. Positions 2173-2184 (LSGSERSVSERS) are enriched in polar residues. The segment covering 2191 to 2201 (RVNEWDSRTED) has biased composition (basic and acidic residues). A Phosphothreonine modification is found at Thr2204. Residue Ser2206 is modified to Phosphoserine. Composition is skewed to basic and acidic residues over residues 2329–2338 (LKERQSDQDM) and 2407–2417 (KDSQSCRDKPQ). A compositionally biased stretch (polar residues) spans 2419–2432 (MRSSTSGATSFGSN). A phosphoserine mark is found at Ser2431 and Ser2460. A compositionally biased stretch (basic and acidic residues) spans 2465 to 2478 (MKSKERSDVEHEQQ). The segment at 2465–2485 (MKSKERSDVEHEQQVTESPSL) is disordered. Residues 2517 to 2559 (GETSFAKGFWAGVELDKPEGNNNGTYDGIAYFECKEKHGIFAP) form the CAP-Gly domain. Thr2689 is modified (phosphothreonine). Residues 2719-2752 (LLDLLTREKNQLEAQLKSSLNEEKKSKQQLEKIS) are a coiled coil. Phosphoserine is present on residues Ser2830 and Ser2839.

In terms of assembly, part of a ternary complex that contains CEP350, CEP43 and MAPRE1. Interacts (via C-terminus) directly with CEP43 (via N-terminus). Interacts with NR1H3, PPARA, PPARD and PPARG. Interacts directly with microtubules. Interacts with the fusion protein CEP43-FGFR1, and by doing so recruits and activates PI3K and PLC-gamma. Interacts with CYLD. Interacts with CFAP157. Interacts with CEP19 (via C-terminus). Interacts with CEP78; promoting CEP78 localization to centrosome and centriole. Post-translationally, phosphorylated during mitosis. As to expression, detected in heart, brain, skeletal muscle, testis, placenta, lung, liver, kidney and pancreas.

Its subcellular location is the cytoplasm. The protein resides in the cytoskeleton. The protein localises to the microtubule organizing center. It localises to the centrosome. It is found in the spindle. Its subcellular location is the nucleus. The protein resides in the centriole. The protein localises to the cilium basal body. In terms of biological role, plays an essential role in centriole growth by stabilizing a procentriolar seed composed of at least, SASS6 and CPAP. Required for anchoring microtubules to the centrosomes and for the integrity of the microtubule network. Recruits PPARA to discrete subcellular compartments and thereby modulates PPARA activity. Required for ciliation. In Homo sapiens (Human), this protein is Centrosome-associated protein 350.